The following is a 203-amino-acid chain: Holliday junction branch migration complex subunit RuvA (203 aa).

The tract at residues methionine 1–proline 65 is domain I. The segment at cysteine 66–glycine 144 is domain II. The tract at residues alanine 145 to phenylalanine 155 is flexible linker. A domain III region spans residues phenylalanine 155 to lysine 203.

It belongs to the RuvA family. In terms of assembly, homotetramer. Forms an RuvA(8)-RuvB(12)-Holliday junction (HJ) complex. HJ DNA is sandwiched between 2 RuvA tetramers; dsDNA enters through RuvA and exits via RuvB. An RuvB hexamer assembles on each DNA strand where it exits the tetramer. Each RuvB hexamer is contacted by two RuvA subunits (via domain III) on 2 adjacent RuvB subunits; this complex drives branch migration. In the full resolvosome a probable DNA-RuvA(4)-RuvB(12)-RuvC(2) complex forms which resolves the HJ.

The protein localises to the cytoplasm. The RuvA-RuvB-RuvC complex processes Holliday junction (HJ) DNA during genetic recombination and DNA repair, while the RuvA-RuvB complex plays an important role in the rescue of blocked DNA replication forks via replication fork reversal (RFR). RuvA specifically binds to HJ cruciform DNA, conferring on it an open structure. The RuvB hexamer acts as an ATP-dependent pump, pulling dsDNA into and through the RuvAB complex. HJ branch migration allows RuvC to scan DNA until it finds its consensus sequence, where it cleaves and resolves the cruciform DNA. The chain is Holliday junction branch migration complex subunit RuvA from Maridesulfovibrio salexigens (strain ATCC 14822 / DSM 2638 / NCIMB 8403 / VKM B-1763) (Desulfovibrio salexigens).